Consider the following 331-residue polypeptide: Aspartate carbamoyltransferase catalytic subunit (331 aa).

Residues R76 and T77 each contribute to the carbamoyl phosphate site. K104 lines the L-aspartate pocket. R126, H154, and Q157 together coordinate carbamoyl phosphate. The L-aspartate site is built by R187 and R246. Carbamoyl phosphate contacts are provided by G287 and P288.

The protein belongs to the aspartate/ornithine carbamoyltransferase superfamily. ATCase family. In terms of assembly, heterododecamer (2C3:3R2) of six catalytic PyrB chains organized as two trimers (C3), and six regulatory PyrI chains organized as three dimers (R2).

The catalysed reaction is carbamoyl phosphate + L-aspartate = N-carbamoyl-L-aspartate + phosphate + H(+). It functions in the pathway pyrimidine metabolism; UMP biosynthesis via de novo pathway; (S)-dihydroorotate from bicarbonate: step 2/3. Catalyzes the condensation of carbamoyl phosphate and aspartate to form carbamoyl aspartate and inorganic phosphate, the committed step in the de novo pyrimidine nucleotide biosynthesis pathway. The protein is Aspartate carbamoyltransferase catalytic subunit of Dehalococcoides mccartyi (strain ATCC BAA-2100 / JCM 16839 / KCTC 5957 / BAV1).